Consider the following 309-residue polypeptide: Olfactory receptor 2G3 (309 aa).

At 1-25 (MGLGNESSLMDFILLGFSDHPRLEA) the chain is on the extracellular side. The N-linked (GlcNAc...) asparagine glycan is linked to Asn5. The helical transmembrane segment at 26 to 49 (VLFVFVLFFYLLTLVGNFTIIIIS) threads the bilayer. At 50–57 (YLDPPLHT) the chain is on the cytoplasmic side. Residues 58 to 79 (PMYFFLSNLSLLDICFTTSLAP) form a helical membrane-spanning segment. Residues 80-100 (QTLVNLQRPKKTITYGGCVAQ) lie on the Extracellular side of the membrane. Cys97 and Cys189 are joined by a disulfide. A helical membrane pass occupies residues 101 to 120 (LYISLALGSTECILLADMAL). The Cytoplasmic segment spans residues 121 to 139 (DRYIAVCKPLHYVVIMNPR). Residues 140–158 (LCQQLASISWLSGLASSLI) traverse the membrane as a helical segment. Topologically, residues 159–195 (HATFTLQLPLCGNHRLDHFICEVPALLKLACVDTTVN) are extracellular. A helical transmembrane segment spans residues 196–219 (ELVLFVVSVLFVVIPPALISISYG). At 220–236 (FITQAVLRIKSVEARHK) the chain is on the cytoplasmic side. A helical transmembrane segment spans residues 237 to 259 (AFSTCSSHLTVVIIFYGTIIYVY). Residues 260–272 (LQPSDSYAQDQGK) lie on the Extracellular side of the membrane. Residues 273–292 (FISLFYTMVTPTLNPIIYTL) form a helical membrane-spanning segment. The Cytoplasmic segment spans residues 293–309 (RNKDMKEALRKLLSGKL).

This sequence belongs to the G-protein coupled receptor 1 family.

It is found in the cell membrane. Odorant receptor. In Homo sapiens (Human), this protein is Olfactory receptor 2G3 (OR2G3).